We begin with the raw amino-acid sequence, 240 residues long: UDP-2,3-diacylglucosamine hydrolase (240 aa).

5 residues coordinate Mn(2+): Asp8, His10, Asp41, Asn79, and His114. 79-80 (NR) provides a ligand contact to substrate. 5 residues coordinate substrate: Asp122, Ser160, Asn164, Lys167, and His195. Positions 195 and 197 each coordinate Mn(2+).

This sequence belongs to the LpxH family. The cofactor is Mn(2+).

The protein resides in the cell inner membrane. The enzyme catalyses UDP-2-N,3-O-bis[(3R)-3-hydroxytetradecanoyl]-alpha-D-glucosamine + H2O = 2-N,3-O-bis[(3R)-3-hydroxytetradecanoyl]-alpha-D-glucosaminyl 1-phosphate + UMP + 2 H(+). Its pathway is glycolipid biosynthesis; lipid IV(A) biosynthesis; lipid IV(A) from (3R)-3-hydroxytetradecanoyl-[acyl-carrier-protein] and UDP-N-acetyl-alpha-D-glucosamine: step 4/6. Functionally, hydrolyzes the pyrophosphate bond of UDP-2,3-diacylglucosamine to yield 2,3-diacylglucosamine 1-phosphate (lipid X) and UMP by catalyzing the attack of water at the alpha-P atom. Involved in the biosynthesis of lipid A, a phosphorylated glycolipid that anchors the lipopolysaccharide to the outer membrane of the cell. The chain is UDP-2,3-diacylglucosamine hydrolase from Escherichia coli O6:H1 (strain CFT073 / ATCC 700928 / UPEC).